We begin with the raw amino-acid sequence, 156 residues long: MGRSIFVNLGLLVVAFSLRGSEADCPSGWSSYDKYCYKVFDERKNWDEAESFCMEQKTGSHLASILSSEEGSYVANLAFKRVKHPSMWIGLSNIWNQCSWQWSDGSSLGYEAWVEGPDCVMMRLQPGFIDWYSVECKSTLPFTCKFLAKREDPAPE.

Positions 1 to 23 are cleaved as a signal peptide; that stretch reads MGRSIFVNLGLLVVAFSLRGSEA. Disulfide bonds link cysteine 25/cysteine 36, cysteine 53/cysteine 144, and cysteine 119/cysteine 136. Residues 32 to 145 enclose the C-type lectin domain; the sequence is YDKYCYKVFD…CKSTLPFTCK (114 aa).

This sequence belongs to the snaclec family. As to quaternary structure, heterodimer of subunits A and B; disulfide-linked. As to expression, expressed by the venom gland.

The protein localises to the secreted. Functionally, interferes with one step of hemostasis (modulation of platelet aggregation, or coagulation cascade, for example). The protein is Snaclec subunit B of Philodryas olfersii (Green snake).